The primary structure comprises 239 residues: Cysteine-rich venom protein ophanin (239 aa).

A signal peptide spans 1–18 (MIAFTLLSLAAVLQQSFG). The SCP domain maps to 37-165 (VDLHNSLRRS…EYSYFYVCQY (129 aa)). Intrachain disulfides connect Cys74/Cys152, Cys91/Cys166, Cys147/Cys163, Cys185/Cys192, Cys188/Cys197, Cys201/Cys234, Cys210/Cys228, and Cys219/Cys232. Positions 201-234 (CTLYNEYTNCDSLVKQSSCQDEWIKSKCPASCFC) constitute a ShKT domain.

In terms of tissue distribution, expressed by the venom gland.

The protein resides in the secreted. Functionally, weakly blocks contraction of smooth muscle elicited by high potassium-induced depolarization, but does not block caffeine-stimulated contraction. May target voltage-gated calcium channels on smooth muscle. The polypeptide is Cysteine-rich venom protein ophanin (Ophiophagus hannah (King cobra)).